Consider the following 208-residue polypeptide: Putative chemokine-related protein FP248 (208 aa).

Residues 1–23 (MGTGGSLLCGCSLVLSCLCPSAS) form the signal peptide. The N-linked (GlcNAc...) asparagine glycan is linked to asparagine 29.

Its subcellular location is the secreted. The polypeptide is Putative chemokine-related protein FP248 (Homo sapiens (Human)).